The primary structure comprises 432 residues: D-amino acid dehydrogenase (432 aa).

3–17 contacts FAD; that stretch reads VVILGSGVVGVTSAW.

It belongs to the DadA oxidoreductase family. It depends on FAD as a cofactor.

The enzyme catalyses a D-alpha-amino acid + A + H2O = a 2-oxocarboxylate + AH2 + NH4(+). It participates in amino-acid degradation; D-alanine degradation; NH(3) and pyruvate from D-alanine: step 1/1. Functionally, oxidative deamination of D-amino acids. This is D-amino acid dehydrogenase from Salmonella agona (strain SL483).